The primary structure comprises 270 residues: Molybdenum storage protein subunit beta (270 aa).

In terms of assembly, octamer consisting of 4 alpha and 4 beta chains.

The protein resides in the cytoplasm. In terms of biological role, intracellular storage of molybdenum. Binds polyoxomolybdates. Can bind at least 90 molybdenum atoms per protein molecule. This chain is Molybdenum storage protein subunit beta, found in Azotobacter vinelandii (strain DJ / ATCC BAA-1303).